Reading from the N-terminus, the 321-residue chain is RNA/RNP complex-1-interacting phosphatase (321 aa).

Residues 1-11 show a composition bias toward basic residues; that stretch reads MNQHYGRHGRG. The interval 1–27 is disordered; sequence MNQHYGRHGRGRGRDFAACAPPKKKGR. Positions 60–207 constitute a Tyrosine-protein phosphatase domain; it reads FEAKLMPEEC…LQKRHVRKNR (148 aa). The active-site Phosphocysteine intermediate is the Cys151. Position 152–157 (152–157) interacts with substrate; sequence THGLNR. Arg157 functions as the Proton donor/acceptor in the catalytic mechanism. The interval 205–262 is disordered; the sequence is KNRNVSAPRTDGLEDSADPTEQVYTNNKPVKKKPRKNRRGGHLAPSQHFQHQTQSSPY. The span at 233 to 245 shows a compositional bias: basic residues; sequence PVKKKPRKNRRGG. A compositionally biased stretch (polar residues) spans 251-262; it reads QHFQHQTQSSPY.

Belongs to the protein-tyrosine phosphatase family. Non-receptor class dual specificity subfamily. As to quaternary structure, monomer. May interact with SFRS7 and SFRS9/SRP30C.

Its subcellular location is the nucleus. It is found in the nucleus speckle. Possesses RNA 5'-triphosphatase and diphosphatase activities, but displays a poor protein-tyrosine phosphatase activity. In addition, has phosphatase activity with ATP, ADP and O-methylfluorescein phosphate (in vitro). Binds to RNA. May participate in nuclear mRNA metabolism. The protein is RNA/RNP complex-1-interacting phosphatase (Dusp11) of Mus musculus (Mouse).